The chain runs to 357 residues: Histidinol-phosphate aminotransferase (357 aa).

N6-(pyridoxal phosphate)lysine is present on Lys-218.

It belongs to the class-II pyridoxal-phosphate-dependent aminotransferase family. Histidinol-phosphate aminotransferase subfamily. In terms of assembly, homodimer. Requires pyridoxal 5'-phosphate as cofactor.

The enzyme catalyses L-histidinol phosphate + 2-oxoglutarate = 3-(imidazol-4-yl)-2-oxopropyl phosphate + L-glutamate. It participates in amino-acid biosynthesis; L-histidine biosynthesis; L-histidine from 5-phospho-alpha-D-ribose 1-diphosphate: step 7/9. The protein is Histidinol-phosphate aminotransferase of Prosthecochloris aestuarii (strain DSM 271 / SK 413).